Here is a 732-residue protein sequence, read N- to C-terminus: Cullin-3A (732 aa).

One can recognise a Cullin neddylation domain in the interval 662–724 (DRKPQIEAAI…RDFLERDSTD (63 aa)). K676 participates in a covalent cross-link: Glycyl lysine isopeptide (Lys-Gly) (interchain with G-Cter in NEDD8).

This sequence belongs to the cullin family. As to quaternary structure, interacts with CSN2 and RBX1A. Interacts with BTB/POZ domain-containing proteins BPM1, BPM2, BPM3, BPM6, BT1, BT2, BT3, BT5, AT1G01640, AT1G21780 and AT5G48510. Interacts with SR1IP1. Interacts with NPR3 and NPR4. Binds to NPR1; this interaction requires NPR3 and NPR4. Neddylated. Deneddylated via its interaction with the COP9 signalosome (CSN) complex.

In terms of biological role, component of the cullin-RING ubiquitin ligases (CRL), or CUL3-RBX1-BTB protein E3 ligase complexes which mediate the ubiquitination and subsequent proteasomal degradation of target proteins. The functional specificity of the CRL complex depends on the BTB domain-containing protein as the substrate recognition component. Involved in embryo pattern formation and endosperm development. Required for the normal division and organization of the root stem cells and columella root cap cells. Regulates primary root growth by an unknown pathway, but in an ethylene-dependent manner. Functions in distal root patterning, by an ethylene-independent mechanism. Functionally redundant with CUL3B. The sequence is that of Cullin-3A from Arabidopsis thaliana (Mouse-ear cress).